Reading from the N-terminus, the 392-residue chain is Isocitrate dehydrogenase [NAD] subunit gamma, mitochondrial (392 aa).

The transit peptide at 1–39 (MALKVATAAGGAVKAALRPALLWRPWEVLGSHEAPRRSF) directs the protein to the mitochondrion. Citrate-binding residues include Thr-119 and Asn-132. Arg-135, Arg-166, and Asp-253 together coordinate substrate. Residue Asp-253 participates in Mn(2+) binding. 3 residues coordinate ADP: Asn-311, Thr-312, and Asn-323.

The protein belongs to the isocitrate and isopropylmalate dehydrogenases family. As to quaternary structure, heterooligomer of subunits alpha (IDH3A), beta (IDH3B), and gamma (IDH3G) in the apparent ratio of 2:1:1. The heterodimer containing one IDH3A and one IDH3B subunit and the heterodimer containing one IDH3A and one IDH3G subunit assemble into a heterotetramer (which contains two subunits of IDH3A, one of IDH3B and one of IDH3G) and further into the heterooctamer. Requires Mg(2+) as cofactor. Mn(2+) serves as cofactor.

It is found in the mitochondrion. The heterotetramer and the heterodimer composed of IDH3A and IDH3G subunits can be allosterically activated by citrate (CIT) or/and ADP, and the two activators can act independently or synergistically. The heterodimer composed of IDH3A and IDH3B subunits cannot be allosterically regulated and the allosteric regulation of the heterotetramer is through the IDH3G subunit and not the IDH3B subunit. The IDH3G subunit contains the allosteric site which consists of a CIT-binding site and an ADP-binding site, and the binding of CIT and ADP causes conformational changes at the allosteric site which are transmitted to the active site in the catalytic subunit (IDH3A) through a cascade of conformational changes at the heterodimer interface, leading to stabilization of the isocitrate-binding at the active site and thus activation of the enzyme. ATP can activate the heterotetramer and the heterodimer composed of IDH3A and IDH3G subunits at low concentrations but inhibits their activities at high concentrations, whereas ATP exhibits only inhibitory effect on the heterodimer composed of IDH3A and IDH3B subunits. Functionally, regulatory subunit which plays a role in the allosteric regulation of the enzyme catalyzing the decarboxylation of isocitrate (ICT) into alpha-ketoglutarate. The heterodimer composed of the alpha (IDH3A) and beta (IDH3B) subunits and the heterodimer composed of the alpha (IDH3A) and gamma (IDH3G) subunits, have considerable basal activity but the full activity of the heterotetramer (containing two subunits of IDH3A, one of IDH3B and one of IDH3G) requires the assembly and cooperative function of both heterodimers. This is Isocitrate dehydrogenase [NAD] subunit gamma, mitochondrial (IDH3G) from Bos taurus (Bovine).